The sequence spans 134 residues: ATP synthase epsilon chain (134 aa).

The protein belongs to the ATPase epsilon chain family. F-type ATPases have 2 components, CF(1) - the catalytic core - and CF(0) - the membrane proton channel. CF(1) has five subunits: alpha(3), beta(3), gamma(1), delta(1), epsilon(1). CF(0) has three main subunits: a, b and c.

The protein localises to the cell inner membrane. Functionally, produces ATP from ADP in the presence of a proton gradient across the membrane. This Rhizobium meliloti (strain 1021) (Ensifer meliloti) protein is ATP synthase epsilon chain.